Reading from the N-terminus, the 206-residue chain is Outer-membrane lipoprotein LolB (206 aa).

An N-terminal signal peptide occupies residues 1–18 (MKTFKFLTALFATAILTA). Cysteine 19 is lipidated: N-palmitoyl cysteine. Residue cysteine 19 is the site of S-diacylglycerol cysteine attachment.

This sequence belongs to the LolB family. As to quaternary structure, monomer.

It is found in the cell outer membrane. Functionally, plays a critical role in the incorporation of lipoproteins in the outer membrane after they are released by the LolA protein. The sequence is that of Outer-membrane lipoprotein LolB from Haemophilus influenzae (strain PittEE).